We begin with the raw amino-acid sequence, 208 residues long: FMN-dependent NADH:quinone oxidoreductase (208 aa).

FMN is bound by residues S10, 16–18, 94–97, and 138–141; these read SVS, MYNF, and SRGG.

The protein belongs to the azoreductase type 1 family. In terms of assembly, homodimer. Requires FMN as cofactor.

The enzyme catalyses 2 a quinone + NADH + H(+) = 2 a 1,4-benzosemiquinone + NAD(+). It catalyses the reaction N,N-dimethyl-1,4-phenylenediamine + anthranilate + 2 NAD(+) = 2-(4-dimethylaminophenyl)diazenylbenzoate + 2 NADH + 2 H(+). Functionally, quinone reductase that provides resistance to thiol-specific stress caused by electrophilic quinones. Also exhibits azoreductase activity. Catalyzes the reductive cleavage of the azo bond in aromatic azo compounds to the corresponding amines. This chain is FMN-dependent NADH:quinone oxidoreductase, found in Hyphomonas neptunium (strain ATCC 15444).